The sequence spans 184 residues: ATP synthase subunit delta (184 aa).

It belongs to the ATPase delta chain family. F-type ATPases have 2 components, F(1) - the catalytic core - and F(0) - the membrane proton channel. F(1) has five subunits: alpha(3), beta(3), gamma(1), delta(1), epsilon(1). F(0) has three main subunits: a(1), b(2) and c(10-14). The alpha and beta chains form an alternating ring which encloses part of the gamma chain. F(1) is attached to F(0) by a central stalk formed by the gamma and epsilon chains, while a peripheral stalk is formed by the delta and b chains.

It is found in the cell inner membrane. In terms of biological role, f(1)F(0) ATP synthase produces ATP from ADP in the presence of a proton or sodium gradient. F-type ATPases consist of two structural domains, F(1) containing the extramembraneous catalytic core and F(0) containing the membrane proton channel, linked together by a central stalk and a peripheral stalk. During catalysis, ATP synthesis in the catalytic domain of F(1) is coupled via a rotary mechanism of the central stalk subunits to proton translocation. This protein is part of the stalk that links CF(0) to CF(1). It either transmits conformational changes from CF(0) to CF(1) or is implicated in proton conduction. The polypeptide is ATP synthase subunit delta (Phenylobacterium zucineum (strain HLK1)).